The sequence spans 273 residues: Undecaprenyl-diphosphatase (273 aa).

8 helical membrane-spanning segments follow: residues 18–40 (GLTE…LLGF), 45–65 (AKTF…VVFW), 92–112 (GHIL…HEQI), 114–134 (AIFA…LLLA), 151–171 (LTYL…WPGF), 189–209 (YAAS…ATVL), 225–245 (MFAI…KFFL), and 253–273 (FVPF…ILIG).

Belongs to the UppP family.

Its subcellular location is the cell inner membrane. The catalysed reaction is di-trans,octa-cis-undecaprenyl diphosphate + H2O = di-trans,octa-cis-undecaprenyl phosphate + phosphate + H(+). Functionally, catalyzes the dephosphorylation of undecaprenyl diphosphate (UPP). Confers resistance to bacitracin. The polypeptide is Undecaprenyl-diphosphatase (Sodalis glossinidius (strain morsitans)).